The following is a 354-amino-acid chain: Serum paraoxonase/lactonase 3 (354 aa).

Cysteine 42 and cysteine 352 are joined by a disulfide. Residue asparagine 50 is glycosylated (N-linked (GlcNAc...) asparagine). Ca(2+)-binding residues include glutamate 53 and aspartate 54. Histidine 114 acts as the Proton acceptor in catalysis. Residue isoleucine 116 participates in Ca(2+) binding. At serine 165 the chain carries Phosphoserine. Asparagine 167, aspartate 168, asparagine 223, aspartate 268, and asparagine 269 together coordinate Ca(2+). 2 N-linked (GlcNAc...) asparagine glycosylation sites follow: asparagine 269 and asparagine 323.

This sequence belongs to the paraoxonase family. Homodimer. Ca(2+) serves as cofactor. Post-translationally, glycosylated. In terms of processing, the signal sequence is not cleaved.

Its subcellular location is the secreted. The protein localises to the extracellular space. It carries out the reaction a phenyl acetate + H2O = a phenol + acetate + H(+). The enzyme catalyses An aryl dialkyl phosphate + H2O = dialkyl phosphate + an aryl alcohol.. The catalysed reaction is an N-acyl-L-homoserine lactone + H2O = an N-acyl-L-homoserine + H(+). Functionally, has low activity towards the organophosphate paraxon and aromatic carboxylic acid esters. Rapidly hydrolyzes lactones such as statin prodrugs (e.g. lovastatin). Hydrolyzes aromatic lactones and 5- or 6-member ring lactones with aliphatic substituents but not simple lactones or those with polar substituents. In Rattus norvegicus (Rat), this protein is Serum paraoxonase/lactonase 3 (Pon3).